Reading from the N-terminus, the 92-residue chain is MTRSLKKGPFVADHLLKKIEDLNLKKEKKIIITWSRASTIVPTMIGHTIAVYNGQEHLPIYITDRMIGHKLGEFAPTRNFRGHTKSDKKSRR.

It belongs to the universal ribosomal protein uS19 family.

The protein resides in the plastid. Its subcellular location is the chloroplast. Functionally, protein S19 forms a complex with S13 that binds strongly to the 16S ribosomal RNA. The sequence is that of Small ribosomal subunit protein uS19c from Physcomitrium patens (Spreading-leaved earth moss).